Consider the following 57-residue polypeptide: Potassium channel toxin alpha-KTx 26.3 (57 aa).

The first 15 residues, 1-15, serve as a signal peptide directing secretion; sequence MSGLSVFILIALVLS. The propeptide occupies 16–24; the sequence is VIIDVLNNS. 3 disulfides stabilise this stretch: Cys-30–Cys-48, Cys-34–Cys-53, and Cys-38–Cys-55.

The protein belongs to the short scorpion toxin superfamily. Potassium channel inhibitor family. Alpha-KTx 26 subfamily. As to expression, expressed by the venom gland.

It is found in the secreted. Recombinant toxin that reversibly inhibits the potassium current of mKv1.3/KCNA3 channel stably expressed in COS7 cells (IC(50)=150 nM). The protein is Potassium channel toxin alpha-KTx 26.3 of Mesobuthus gibbosus (Mediterranean checkered scorpion).